Reading from the N-terminus, the 784-residue chain is Cas scaffolding protein family member 4 (784 aa).

The region spanning P11 to E73 is the SH3 domain. S197, S246, S302, S373, and S387 each carry phosphoserine. A disordered region spans residues T343–H376. Residues R466–S536 adopt a coiled-coil conformation. Positions K614–P635 are disordered.

This sequence belongs to the CAS family. In terms of assembly, interacts (via SH3 domain) with PTK2/FAK1 (via C-terminus). In terms of processing, phosphorylated on tyrosines by SRC.

The protein localises to the cytoplasm. Its subcellular location is the cytoskeleton. The protein resides in the cell junction. It localises to the focal adhesion. Its function is as follows. Docking protein that plays a role in tyrosine kinase-based signaling related to cell adhesion and cell spreading. Regulates PTK2/FAK1 activity, focal adhesion integrity, and cell spreading. The polypeptide is Cas scaffolding protein family member 4 (Sus scrofa (Pig)).